The sequence spans 632 residues: Cyclic GMP-AMP synthase-like receptor 2 (632 aa).

3 residues coordinate Mg(2+): aspartate 71, aspartate 73, and aspartate 181. Residue aspartate 295 coordinates Mn(2+).

It belongs to the mab-21 family. Requires Mg(2+) as cofactor. Mn(2+) serves as cofactor.

Its function is as follows. Nucleotidyltransferase that catalyzes the formation of some cyclic nucleotide and plays a key role in innate immunity. Directly binds some unknown ligand, activating the nucleotidyltransferase activity, leading to synthesis of a second messenger that binds to and activates Sting, thereby triggering the immune response via activation of the NF-kappa-B transcription factor. The sequence is that of Cyclic GMP-AMP synthase-like receptor 2 from Crassostrea virginica (Eastern oyster).